The sequence spans 358 residues: Protein Wnt-8 (358 aa).

A signal peptide spans M1–S22. Cysteines 55 and 66 form a disulfide. N104 is a glycosylation site (N-linked (GlcNAc...) asparagine). Disulfide bonds link C105–C113, C115–C133, C181–C195, C183–C190, C260–C298, C276–C291, C295–C337, C313–C328, C315–C325, and C320–C321. S187 is lipidated: O-palmitoleoyl serine. Residues N263 and N282 are each glycosylated (N-linked (GlcNAc...) asparagine).

Belongs to the Wnt family. As to quaternary structure, homooligomer; disulfide-linked, leading to inactivation. Interacts with the long chain of cer1. In terms of processing, palmitoleoylation is required for efficient binding to frizzled receptors. Depalmitoleoylation leads to Wnt signaling pathway inhibition. Post-translationally, proteolytic processing by tiki1 and tiki2 promotes oxidation and formation of large disulfide-bond oligomers, leading to inactivation of wnt8.

The protein resides in the secreted. The protein localises to the extracellular space. Its subcellular location is the extracellular matrix. Ligand for members of the frizzled family of seven transmembrane receptors. Plays a role in ventral mesodermal patterning during embryogenesis. Mimics Nieuwkoop center activity. Causes dorsal mesodermal differentiation of animal cap ectoderm when coexpressed with noggin and nuclear, sequence-specific DNA-binding protein xBra. None of these molecules causes dorsal mesoderm formation when expressed alone. In Xenopus laevis (African clawed frog), this protein is Protein Wnt-8 (wnt8).